The sequence spans 651 residues: Apical membrane antigen 1-like protein (651 aa).

Positions Met1 to Ala41 are cleaved as a signal peptide. The propeptide at Thr42 to Pro81 is removed in mature form. Residues Thr42–Thr570 are Extracellular-facing. 7 cysteine pairs are disulfide-bonded: Cys141–Cys309, Cys215–Cys248, Cys264–Cys277, Cys327–Cys417, Cys347–Cys408, Cys441–Cys463, and Cys453–Cys475. An N-linked (GlcNAc...) asparagine glycan is attached at Asn230. The 1; approximate repeat unit spans residues Pro483 to Lys486. The tract at residues Pro483–Glu531 is 12 x 4 AA approximate tandem-repeats of P-P-V-E. A compositionally biased stretch (pro residues) spans Pro483 to Pro547. Positions Pro483 to Gly567 are disordered. A run of 9 repeats spans residues Pro487–Glu490, Pro491–Glu494, Pro495–Glu498, Pro499–Glu502, Pro503–Glu506, Pro507–Glu510, Pro511–Glu514, Pro515–Glu518, and Pro519–Glu522. The 11; approximate repeat unit spans residues Pro523 to Glu527. A 12; approximate repeat occupies Pro528–Glu531. The helical transmembrane segment at Ala571–Val591 threads the bilayer. The Cytoplasmic segment spans residues Gly592 to Phe651. A disordered region spans residues Arg598–Phe651.

It belongs to the apicomplexan parasites AMA1 family. Post-translationally, proteolytically cleaved within its transmembrane domain, releasing a soluble form from the cell surface.

It is found in the cell membrane. The protein resides in the secreted. Functionally, may play a role in host cell invasion. This Toxoplasma gondii (strain ATCC 50861 / VEG) protein is Apical membrane antigen 1-like protein.